Here is a 356-residue protein sequence, read N- to C-terminus: Guanine nucleotide-binding protein alpha-2 subunit (356 aa).

Glycine 2 carries N-myristoyl glycine lipidation. Cysteine 4 is lipidated: S-palmitoyl cysteine. One can recognise a G-alpha domain in the interval arginine 32–tyrosine 356. The G1 motif stretch occupies residues lysine 35 to threonine 48. GTP contacts are provided by glutamate 43, glycine 45, lysine 46, serine 47, threonine 48, aspartate 153, leucine 178, threonine 184, glycine 206, asparagine 272, lysine 273, aspartate 275, and alanine 328. Serine 47 is a binding site for Mg(2+). The tract at residues aspartate 176–threonine 184 is G2 motif. Threonine 184 serves as a coordination point for Mg(2+). The G3 motif stretch occupies residues phenylalanine 199–arginine 208. The G4 motif stretch occupies residues isoleucine 268–aspartate 275. A G5 motif region spans residues threonine 326–threonine 331.

The protein belongs to the G-alpha family. G(q) subfamily. As to quaternary structure, g proteins are composed of 3 units; alpha, beta and gamma. The alpha chain contains the guanine nucleotide binding site. It depends on Mg(2+) as a cofactor.

Functionally, guanine nucleotide-binding proteins (G proteins) are involved as modulators or transducers in various transmembrane signaling systems. Involved in behavioral responses to P.aeruginosa by controlling the expression of daf-7, a member of the TGF-beta family, in ASJ sensory neurons. The sequence is that of Guanine nucleotide-binding protein alpha-2 subunit (gpa-2) from Caenorhabditis elegans.